The chain runs to 220 residues: Demethylmenaquinone methyltransferase (220 aa).

Residues Thr-47, Asp-67, and 93–94 (DA) contribute to the S-adenosyl-L-methionine site.

This sequence belongs to the class I-like SAM-binding methyltransferase superfamily. MenG/UbiE family.

The catalysed reaction is a 2-demethylmenaquinol + S-adenosyl-L-methionine = a menaquinol + S-adenosyl-L-homocysteine + H(+). It functions in the pathway quinol/quinone metabolism; menaquinone biosynthesis; menaquinol from 1,4-dihydroxy-2-naphthoate: step 2/2. Functionally, methyltransferase required for the conversion of demethylmenaquinol (DMKH2) to menaquinol (MKH2). In Thermus thermophilus (strain ATCC BAA-163 / DSM 7039 / HB27), this protein is Demethylmenaquinone methyltransferase.